The sequence spans 65 residues: Large ribosomal subunit protein bL35 (65 aa).

Residues 1 to 15 (MPKMKTKKSASKRFT) are compositionally biased toward basic residues. Disordered stretches follow at residues 1-26 (MPKM…KRGQ) and 38-65 (TKNK…MPYA). Over residues 45 to 54 (RGTEGVHETN) the composition is skewed to basic and acidic residues.

This sequence belongs to the bacterial ribosomal protein bL35 family.

In Ralstonia pickettii (strain 12J), this protein is Large ribosomal subunit protein bL35.